The sequence spans 748 residues: Putative pre-mRNA-splicing factor ATP-dependent RNA helicase DHX32 (748 aa).

The region spanning Leu-74–Glu-240 is the Helicase ATP-binding domain. Residue Ala-87–Ser-94 participates in ATP binding. The region spanning Arg-263–Asp-439 is the Helicase C-terminal domain. Positions Ser-706–Gln-748 are disordered.

The protein belongs to the DEAD box helicase family. DEAH subfamily.

The protein resides in the nucleus. It localises to the mitochondrion. It catalyses the reaction ATP + H2O = ADP + phosphate + H(+). The sequence is that of Putative pre-mRNA-splicing factor ATP-dependent RNA helicase DHX32 (dhx32) from Xenopus laevis (African clawed frog).